A 288-amino-acid polypeptide reads, in one-letter code: Inorganic pyrophosphatase (288 aa).

Arg-80 provides a ligand contact to diphosphate. Mg(2+)-binding residues include Asp-117, Asp-122, and Asp-154. The tract at residues 252 to 271 is disordered; it reads TPSYSDAAAQEIPSASPAPA. Residues 258 to 271 are compositionally biased toward low complexity; the sequence is AAAQEIPSASPAPA.

The protein belongs to the PPase family. Mg(2+) is required as a cofactor.

It localises to the cytoplasm. It catalyses the reaction diphosphate + H2O = 2 phosphate + H(+). This is Inorganic pyrophosphatase (IPP1) from Candida albicans (strain SC5314 / ATCC MYA-2876) (Yeast).